Here is a 682-residue protein sequence, read N- to C-terminus: Protein PilJ (682 aa).

Residues 1–14 (MKKINAGNLFAGMR) lie on the Cytoplasmic side of the membrane. The helical transmembrane segment at 15 to 38 (SSSVIAGLFIVLIVSIVLLFANFA) threads the bilayer. Residues 39–306 (YLNTQSNHDK…DGFENLAGGR (268 aa)) are Periplasmic-facing. The chain crosses the membrane as a helical span at residues 307-333 (SINLFAGYALGALALASIILIGLVMVR). The Cytoplasmic segment spans residues 334-682 (ETNRRLAETA…FKLPEGVEQA (349 aa)). One can recognise an HAMP domain in the interval 347–398 (DRNQAAILRLLDEIADLADGDLTVAATVTEDFTGAIADSINYSIDQLRELVE). The 237-residue stretch at 403 to 639 (TAVQVAAAAQ…HISNTMNVIQ (237 aa)) folds into the Methyl-accepting transducer domain.

The protein belongs to the methyl-accepting chemotaxis (MCP) protein family.

The protein localises to the cell inner membrane. In terms of biological role, may be a part of a signal-transduction system that regulates twitching motility by controlling pilus function (extension and retraction). This chain is Protein PilJ (pilJ), found in Pseudomonas aeruginosa (strain ATCC 15692 / DSM 22644 / CIP 104116 / JCM 14847 / LMG 12228 / 1C / PRS 101 / PAO1).